Reading from the N-terminus, the 240-residue chain is Large ribosomal subunit protein uL2 (240 aa).

Over residues 1–11 the composition is skewed to polar residues; the sequence is MGKRLISQNRG. 2 disordered regions span residues 1 to 25 and 207 to 240; these read MGKR…HKRK and GGRH…TGKR. Basic residues-rich tracts occupy residues 13 to 25 and 224 to 240; these read GTPK…HKRK and SPGR…TGKR.

Belongs to the universal ribosomal protein uL2 family. As to quaternary structure, part of the 50S ribosomal subunit. Forms a bridge to the 30S subunit in the 70S ribosome.

One of the primary rRNA binding proteins. Required for association of the 30S and 50S subunits to form the 70S ribosome, for tRNA binding and peptide bond formation. It has been suggested to have peptidyltransferase activity; this is somewhat controversial. Makes several contacts with the 16S rRNA in the 70S ribosome. The chain is Large ribosomal subunit protein uL2 from Methanococcus maripaludis (strain DSM 14266 / JCM 13030 / NBRC 101832 / S2 / LL).